The chain runs to 110 residues: Methionine-R-sulfoxide reductase B1-A (110 aa).

The region spanning Met-1–Lys-104 is the MsrB domain. Zn(2+)-binding residues include Cys-23, Cys-26, Cys-69, and Cys-72. The Nucleophile role is filled by Sec-93. Residue Sec-93 is a non-standard amino acid, selenocysteine.

This sequence belongs to the MsrB Met sulfoxide reductase family. Zn(2+) serves as cofactor. In the embryo, expressed in the polster, paraxial mesoderm, tectum, otic vesicle and liver.

The protein resides in the cytoplasm. It is found in the nucleus. It localises to the cytoskeleton. It catalyses the reaction L-methionyl-[protein] + [thioredoxin]-disulfide + H2O = L-methionyl-(R)-S-oxide-[protein] + [thioredoxin]-dithiol. The catalysed reaction is [thioredoxin]-disulfide + L-methionine + H2O = L-methionine (R)-S-oxide + [thioredoxin]-dithiol. Its function is as follows. Methionine-sulfoxide reductase that specifically reduces methionine (R)-sulfoxide back to methionine. While in many cases, methionine oxidation is the result of random oxidation following oxidative stress, methionine oxidation is also a post-translational modification that takes place on specific residue. Acts as a regulator of actin assembly by reducing methionine (R)-sulfoxide mediated by MICALs (mical1, mical2 or mical3) on actin, thereby promoting filament repolymerization. Plays a role in innate immunity by reducing oxidized actin, leading to actin repolymerization in macrophages. This is Methionine-R-sulfoxide reductase B1-A (msrb1) from Danio rerio (Zebrafish).